The sequence spans 142 residues: Universal stress protein C (142 aa).

Belongs to the universal stress protein A family.

It localises to the cytoplasm. Required for resistance to DNA-damaging agents. The sequence is that of Universal stress protein C (uspC) from Salmonella typhimurium (strain LT2 / SGSC1412 / ATCC 700720).